A 700-amino-acid polypeptide reads, in one-letter code: Transketolase (700 aa).

The residue at position 2 (threonine 2) is an N-acetylthreonine. Histidine 45 lines the substrate pocket. Thiamine diphosphate is bound by residues threonine 48, histidine 85, 133-135 (GPL), and leucine 135. Aspartate 177 provides a ligand contact to Mg(2+). Thiamine diphosphate is bound by residues glycine 178 and asparagine 207. Residues asparagine 207 and isoleucine 209 each contribute to the Mg(2+) site. Substrate-binding residues include histidine 283, arginine 378, and serine 405. Histidine 283 serves as a coordination point for thiamine diphosphate. Glutamate 441 serves as the catalytic Proton donor. Residue phenylalanine 467 participates in thiamine diphosphate binding. 3 residues coordinate substrate: histidine 491, aspartate 499, and arginine 552.

It belongs to the transketolase family. In terms of assembly, homodimer. The cofactor is Mg(2+). Ca(2+) serves as cofactor. Mn(2+) is required as a cofactor. Requires Co(2+) as cofactor. It depends on thiamine diphosphate as a cofactor.

The catalysed reaction is D-sedoheptulose 7-phosphate + D-glyceraldehyde 3-phosphate = aldehydo-D-ribose 5-phosphate + D-xylulose 5-phosphate. In terms of biological role, catalyzes the reversible transfer of a two-carbon ketol group from sedoheptulose-7-phosphate to glyceraldehyde-3-phosphate, producing xylulose-5-phosphate and ribose-5-phosphate. Catalyzes the transfer of a two-carbon ketol group from a ketose donor to an aldose acceptor, via a covalent intermediate with the cofactor thiamine pyrophosphate. The polypeptide is Transketolase (tkt) (Mycobacterium tuberculosis (strain ATCC 25618 / H37Rv)).